The sequence spans 439 residues: Tol-Pal system protein TolB (439 aa).

The signal sequence occupies residues 1-22; the sequence is MTKFPRWLAMLVGLLFPLSALT.

The protein belongs to the TolB family. In terms of assembly, the Tol-Pal system is composed of five core proteins: the inner membrane proteins TolA, TolQ and TolR, the periplasmic protein TolB and the outer membrane protein Pal. They form a network linking the inner and outer membranes and the peptidoglycan layer.

It localises to the periplasm. Its function is as follows. Part of the Tol-Pal system, which plays a role in outer membrane invagination during cell division and is important for maintaining outer membrane integrity. This chain is Tol-Pal system protein TolB, found in Xylella fastidiosa (strain 9a5c).